The chain runs to 89 residues: Small ribosomal subunit protein uS15 (89 aa).

This sequence belongs to the universal ribosomal protein uS15 family. Part of the 30S ribosomal subunit. Forms a bridge to the 50S subunit in the 70S ribosome, contacting the 23S rRNA.

Functionally, one of the primary rRNA binding proteins, it binds directly to 16S rRNA where it helps nucleate assembly of the platform of the 30S subunit by binding and bridging several RNA helices of the 16S rRNA. Its function is as follows. Forms an intersubunit bridge (bridge B4) with the 23S rRNA of the 50S subunit in the ribosome. The chain is Small ribosomal subunit protein uS15 from Frankia alni (strain DSM 45986 / CECT 9034 / ACN14a).